A 146-amino-acid polypeptide reads, in one-letter code: 3-dehydroquinate dehydratase (146 aa).

The active-site Proton acceptor is the tyrosine 22. Residues asparagine 73, histidine 79, and aspartate 86 each contribute to the substrate site. Catalysis depends on histidine 99, which acts as the Proton donor. Substrate is bound by residues 100–101 (LS) and arginine 110.

The protein belongs to the type-II 3-dehydroquinase family. In terms of assembly, homododecamer.

The catalysed reaction is 3-dehydroquinate = 3-dehydroshikimate + H2O. It participates in metabolic intermediate biosynthesis; chorismate biosynthesis; chorismate from D-erythrose 4-phosphate and phosphoenolpyruvate: step 3/7. Catalyzes a trans-dehydration via an enolate intermediate. In Parasynechococcus marenigrum (strain WH8102), this protein is 3-dehydroquinate dehydratase.